We begin with the raw amino-acid sequence, 635 residues long: Glutamine sensor PIB2 (635 aa).

The disordered stretch occupies residues 1–110 (MTALHSVSKT…GTGFVDRKQQ (110 aa)). The interval 1-164 (MTALHSVSKT…KTLPFTDDQR (164 aa)) is may play a role in attenuating TORC1 signaling. A compositionally biased stretch (basic and acidic residues) spans 33–44 (RNHDYRGRKGDE). Phosphoserine is present on residues Ser-46 and Ser-53. Position 56 is a phosphothreonine (Thr-56). Residues 67-85 (STHSEQSILSSISLKSMVN) are compositionally biased toward polar residues. Phosphoserine occurs at positions 73, 113, 124, 148, 165, and 174. Disordered stretches follow at residues 123–181 (NSAE…VSRG) and 224–254 (SSNL…TSKV). Positions 238-254 (SSSSSTSSVSSSSTSKV) are enriched in low complexity. Residues Ser-300, Ser-309, and Ser-381 each carry the phosphoserine modification. Positions 304–440 (LPQPASSTNL…PTISNRNSAR (137 aa)) are required for interaction with TORC1. Residues 452 to 527 (DSKRNSCRYC…ICDDCLVEYE (76 aa)) form an FYVE-type; atypical zinc finger. Zn(2+) contacts are provided by Cys-458, Cys-461, Cys-474, Cys-477, Cys-482, His-485, Cys-519, and Cys-522. 2 disordered regions span residues 534–557 (HNAN…DNRK) and 570–623 (ALFR…GSVI). Acidic residues-rich tracts occupy residues 543–553 (INVEEGEDDDN) and 601–616 (EEAD…EEGN). Residues 620–635 (GSVIGSVPANWNWSSF) are may be required for TORC1 activation.

As to quaternary structure, interacts with the TORC1 complex when activated by glutamine or cysteine. Interacts with TOR1; glutamine enhances the interaction. Interacts with KOG1; glutamine enhances the interaction. Interacts with TCO89. Interacts with LST8; glutamine enhances the interaction. Interacts with TOR2; glutamine enhances the interaction.

It localises to the vacuole membrane. Its activity is regulated as follows. Activated by glutamine. May also be activated by cysteine. Functions as an intracellular glutamine sensor that directly activates the TORC1 signaling pathway, to promote cell growth when glutamine is available. May play a role in repressing NPR1 activity independently of TORC1 signaling. The polypeptide is Glutamine sensor PIB2 (Saccharomyces cerevisiae (strain ATCC 204508 / S288c) (Baker's yeast)).